A 498-amino-acid polypeptide reads, in one-letter code: MDETEWIHRHPKAEDLRVGLISWAGTYLTFEACKNTVTATAKSLGRRQTWEILVSNEHETQAVVRLKSVQGLYLLCECDGTVCYGRPRTSHHGCFLLRFHRNSKWTLQCLISGRYLESNGKDVFCTSHVLSAYHMWTPRPALHVHVILYSPIHRCYARADPTMGRIWVDAAVPCLEECGFLLHFRDGCYHLETSTHHFLSHVDRLFSQPSSQTAFHMQVRPGGLVALCDGEGGMLYPQGTHLLLGMGCNPMRGEEWFILQHCPTWVSLRSKTGRFISVIYDGEVRAASERLNRMSLFQFECDSESPTVQLRSANGYYLSQRRHRAVMADGHPLESDTFFRMHWNCGRIILQSCRGRFLGIAPNSLLMANVILPGPNEEFGILFANRSFLVLRGRYGYVGSSSGHDLIQCNQDQPDRIHLLPCRPGIYHFQAQGGSFWSITSFGTFRPWGKFALNFCIELQGSNLLTVLAPNGFYMRADQSGTLLADSEDITRECIWEF.

This sequence belongs to the fascin family. Expressed in testis.

It is found in the cytoplasm. The protein resides in the cytoskeleton. In terms of biological role, acts as an actin bundling protein. This is Fascin-3 (FSCN3) from Homo sapiens (Human).